Here is a 920-residue protein sequence, read N- to C-terminus: Glutamate receptor 2.2 (920 aa).

The N-terminal stretch at 1–24 (MKNSKLFFRFLFLFFFFCLESSRG) is a signal peptide. The Extracellular segment spans residues 25 to 580 (QDNGKTQVNI…DKFSFLKPLS (556 aa)). Residues Asn53, Asn204, Asn267, Asn331, Asn342, Asn477, and Asn542 are each glycosylated (N-linked (GlcNAc...) asparagine). A helical transmembrane segment spans residues 581–601 (IELWLTTLVFFFLVGISVWTL). Over 602–610 (EHRVNSDFR) the chain is Cytoplasmic. The chain crosses the membrane as a helical span at residues 611–631 (GPANYQASTIFWFAFSTMVFA). The Cytoplasmic segment spans residues 632-635 (PRER). The chain crosses the membrane as a helical span at residues 636–656 (VLSFGARSLVVTWYFVLLVLT). At 657–830 (QSYTASLASL…VTAIQLGVGS (174 aa)) the chain is on the extracellular side. An N-linked (GlcNAc...) asparagine glycan is attached at Asn702. A helical transmembrane segment spans residues 831–851 (FWFLFLVVFVVCVLALGKFTF). The Cytoplasmic portion of the chain corresponds to 852–920 (CFLWKTKGKD…QVNQTDPDCL (69 aa)).

It belongs to the glutamate-gated ion channel (TC 1.A.10.1) family. In terms of assembly, may form heteromers. In terms of tissue distribution, expressed predominantly in roots.

It is found in the membrane. Glutamate-gated receptor that probably acts as a non-selective cation channel. May be involved in light-signal transduction and calcium homeostasis via the regulation of calcium influx into cells. The polypeptide is Glutamate receptor 2.2 (GLR2.2) (Arabidopsis thaliana (Mouse-ear cress)).